The primary structure comprises 129 residues: Flagellar assembly factor FliW (129 aa).

The protein belongs to the FliW family. Interacts with flagellins FlaA and FlaB but not with FlaC; recognizes glycosylated and non-glycosylated FlaA equally. Interacts with CsrA. May form a 3-way complex of flagellin, FliS and FliW simultaneously in which FliS and FliW do not directly interact.

It localises to the cytoplasm. Functionally, acts as an anti-CsrA protein, binds CsrA and prevents it from repressing translation of its target genes, one of which is flagellin. Binds to flagellin and participates in the assembly of the flagellum. Its function is as follows. Overexpression leads to increased levels of FlaA and FlaB, but levels of FlaC remain stable. Involved in post-transcriptional regulation of flagellin biosynthesis. The protein is Flagellar assembly factor FliW of Campylobacter jejuni subsp. jejuni serotype O:6 (strain 81116 / NCTC 11828).